The sequence spans 340 residues: Phenylalanine--tRNA ligase alpha subunit (340 aa).

Glu-255 provides a ligand contact to Mg(2+).

It belongs to the class-II aminoacyl-tRNA synthetase family. Phe-tRNA synthetase alpha subunit type 1 subfamily. As to quaternary structure, tetramer of two alpha and two beta subunits. It depends on Mg(2+) as a cofactor.

It is found in the cytoplasm. The enzyme catalyses tRNA(Phe) + L-phenylalanine + ATP = L-phenylalanyl-tRNA(Phe) + AMP + diphosphate + H(+). This chain is Phenylalanine--tRNA ligase alpha subunit, found in Desulfitobacterium hafniense (strain Y51).